We begin with the raw amino-acid sequence, 218 residues long: Octanoyltransferase (218 aa).

A BPL/LPL catalytic domain is found at 32–218 (GDAPEAVWLL…LRTFSRSFPD (187 aa)). Residues 71–78 (RGGQYTYH), 151–153 (AIG), and 164–166 (GLS) each bind substrate. Cysteine 182 (acyl-thioester intermediate) is an active-site residue.

This sequence belongs to the LipB family.

The protein resides in the cytoplasm. The enzyme catalyses octanoyl-[ACP] + L-lysyl-[protein] = N(6)-octanoyl-L-lysyl-[protein] + holo-[ACP] + H(+). It functions in the pathway protein modification; protein lipoylation via endogenous pathway; protein N(6)-(lipoyl)lysine from octanoyl-[acyl-carrier-protein]: step 1/2. Catalyzes the transfer of endogenously produced octanoic acid from octanoyl-acyl-carrier-protein onto the lipoyl domains of lipoate-dependent enzymes. Lipoyl-ACP can also act as a substrate although octanoyl-ACP is likely to be the physiological substrate. This Cereibacter sphaeroides (strain ATCC 17025 / ATH 2.4.3) (Rhodobacter sphaeroides) protein is Octanoyltransferase.